A 265-amino-acid chain; its full sequence is Mlc titration factor A (265 aa).

Histidine 111, histidine 148, histidine 152, and glutamate 211 together coordinate Zn(2+).

It belongs to the MtfA family. In terms of assembly, interacts with Mlc. It depends on Zn(2+) as a cofactor.

The protein localises to the cytoplasm. In terms of biological role, involved in the modulation of the activity of the glucose-phosphotransferase system (glucose-PTS). Interacts with the transcriptional repressor Mlc, preventing its interaction with DNA and leading to the modulation of expression of genes regulated by Mlc, including ptsG, which encodes the PTS system glucose-specific EIICB component. Shows zinc-dependent metallopeptidase activity. The chain is Mlc titration factor A from Escherichia coli O127:H6 (strain E2348/69 / EPEC).